The following is a 943-amino-acid chain: Isoleucine--tRNA ligase (943 aa).

Positions 58–68 (PYANGSIHIGH) match the 'HIGH' region motif. Glu-567 serves as a coordination point for L-isoleucyl-5'-AMP. Positions 608 to 612 (KMSKS) match the 'KMSKS' region motif. Lys-611 contributes to the ATP binding site. Residues Cys-906, Cys-909, Cys-926, and Cys-929 each contribute to the Zn(2+) site.

This sequence belongs to the class-I aminoacyl-tRNA synthetase family. IleS type 1 subfamily. Monomer. The cofactor is Zn(2+).

The protein resides in the cytoplasm. The enzyme catalyses tRNA(Ile) + L-isoleucine + ATP = L-isoleucyl-tRNA(Ile) + AMP + diphosphate. Functionally, catalyzes the attachment of isoleucine to tRNA(Ile). As IleRS can inadvertently accommodate and process structurally similar amino acids such as valine, to avoid such errors it has two additional distinct tRNA(Ile)-dependent editing activities. One activity is designated as 'pretransfer' editing and involves the hydrolysis of activated Val-AMP. The other activity is designated 'posttransfer' editing and involves deacylation of mischarged Val-tRNA(Ile). This is Isoleucine--tRNA ligase from Pseudomonas fluorescens (strain ATCC BAA-477 / NRRL B-23932 / Pf-5).